The sequence spans 1744 residues: DNA-directed RNA polymerase I subunit RPA1 (1744 aa).

Positions 56, 69, and 72 each coordinate Zn(2+). Mg(2+)-binding residues include D597, D599, and D601. Positions 953-965 (PAEYTIHAMAGRD) are bridging helix. The interval 1333–1484 (VPREKESGDG…RDGTDWGGTS (152 aa)) is disordered. Composition is skewed to gly residues over residues 1341 to 1354 (DGSG…GGSG) and 1366 to 1376 (DDGGGPLGGTF). The span at 1464–1478 (RDAEDGGEMQDRDGT) shows a compositional bias: basic and acidic residues.

This sequence belongs to the RNA polymerase beta' chain family. As to quaternary structure, component of the RNA polymerase I (Pol I) complex consisting of at least 13 subunits. Post-translationally, phosphorylated.

The protein resides in the nucleus. It localises to the nucleolus. It catalyses the reaction RNA(n) + a ribonucleoside 5'-triphosphate = RNA(n+1) + diphosphate. DNA-dependent RNA polymerase catalyzes the transcription of DNA into RNA using the four ribonucleoside triphosphates as substrates. Largest and catalytic core component of RNA polymerase I which synthesizes ribosomal RNA precursors. Forms the polymerase active center together with the second largest subunit. A single stranded DNA template strand of the promoter is positioned within the central active site cleft of Pol I. A bridging helix emanates from RPA1 and crosses the cleft near the catalytic site and is thought to promote translocation of Pol I by acting as a ratchet that moves the RNA-DNA hybrid through the active site by switching from straight to bent conformations at each step of nucleotide addition. In Trypanosoma brucei brucei, this protein is DNA-directed RNA polymerase I subunit RPA1 (TRP11).